Consider the following 177-residue polypeptide: MDLQDFDSAHLYFDEPLAPEVAPVWPAAEQYAEGTAEQPLLEAQALAPDDLTVLVGLYRFYYYQHRYEAALQIARRRVEVVGPRLLLPANWSEIDAGHVAVAAERGIGLLRFYLLALKGGYLSLRLGRFEQGKAMLLKVVELDTDNRLGARLLLDVLAEHSAEILIFPTAANAEIRP.

This is an uncharacterized protein from Azotobacter chroococcum mcd 1.